The following is a 1441-amino-acid chain: Histone-lysine N-methyltransferase SETD5 (1441 aa).

Residues 1–28 (MSIAIPLGVTTPDTSYSDMAAGSDPESV) are disordered. At leucine 70 the chain carries Phosphothreonine. Residues serine 72 and valine 74 each carry the phosphoserine modification. The segment at 156 to 202 (TPTSITLTVRRTKPKKRKKSPEKGRAAPKTKKIKNSPSEAQNLDENT) is disordered. A compositionally biased stretch (basic residues) spans 165 to 189 (RRTKPKKRKKSPEKGRAAPKTKKIK). Polar residues predominate over residues 190–202 (NSPSEAQNLDENT). The SET domain occupies 269–390 (MQLQLGRVTR…KDAEVTIAFD (122 aa)). 2 disordered regions span residues 417 to 683 (NPNA…TVIS) and 793 to 816 (MTQT…ETSN). Composition is skewed to acidic residues over residues 450-461 (LEQQNEVPEENP) and 479-501 (EEVD…DDQE). Low complexity-rich tracts occupy residues 539–552 (SSSD…SSEI) and 561–572 (AAPESEVSSPVS). Residues 575 to 588 (AIPSTPQSTGVNTR) show a composition bias toward polar residues. Over residues 611-621 (SRPRPKSRISR) the composition is skewed to basic residues. The span at 635–650 (QAIAQQAELSQAALEE) shows a compositional bias: low complexity. The segment covering 652–683 (GSNNSVTPPEAGNTDSSGENRQLTGSDPTVIS) has biased composition (polar residues). 2 positions are modified to phosphoserine: serine 829 and serine 852. Disordered stretches follow at residues 849 to 883 (QPLS…ECRN), 1036 to 1228 (DLSR…SKGA), and 1243 to 1441 (CDSP…TGLS). Threonine 855 is modified (phosphothreonine). Over residues 1062–1076 (QRKKVSLLEYRKRKQ) the composition is skewed to basic residues. The span at 1087–1107 (DSSQSKSKSSGAGQGSSNSVS) shows a compositional bias: low complexity. Positions 1144–1163 (PSDSRGTSSSHCRPQENISS) are enriched in polar residues. Residue serine 1197 is modified to Phosphoserine. Residues 1250–1259 (SQSLLQQSSS) show a composition bias toward low complexity. A compositionally biased stretch (polar residues) spans 1265–1275 (PTQSPGYSYRT). Residues 1284–1300 (PSHGSSESSLSSTSYPS) show a composition bias toward low complexity. Residues 1319–1333 (YYSSQPHSGNSTGSN) are compositionally biased toward polar residues. The span at 1335–1372 (PRRSCSSSAASPTPQGPSDSPTSDSVSQSSTGTLSSTS) shows a compositional bias: low complexity. 3 stretches are compositionally biased toward polar residues: residues 1373-1382 (FPQNSRSSLP), 1389-1412 (SLPN…NSQH), and 1429-1441 (LQGS…TGLS).

In terms of assembly, interacts with components of the PAF1 complex (PAF1C) such as LEO1, CTR9 and CDC73. Interacts with NCOR1. Interacts with HDAC3. Ubiquitously expressed.

The protein localises to the nucleus. It is found in the chromosome. It catalyses the reaction L-lysyl(9)-[histone H3] + S-adenosyl-L-methionine = N(6)-methyl-L-lysyl(9)-[histone H3] + S-adenosyl-L-homocysteine + H(+). The enzyme catalyses L-lysyl(36)-[histone H3] + 3 S-adenosyl-L-methionine = N(6),N(6),N(6)-trimethyl-L-lysyl(36)-[histone H3] + 3 S-adenosyl-L-homocysteine + 3 H(+). In terms of biological role, chromatin regulator required for brain development: acts as a regulator of RNA elongation rate, thereby regulating neural stem cell (NSC) proliferation and synaptic transmission. May act by mediating trimethylation of 'Lys-36' of histone H3 (H3K36me3), which is essential to allow on-time RNA elongation dynamics. Also monomethylates 'Lys-9' of histone H3 (H3K9me1) in vitro. The relevance of histone methyltransferase activity is however subject to discussion. This Mus musculus (Mouse) protein is Histone-lysine N-methyltransferase SETD5.